Reading from the N-terminus, the 1141-residue chain is PR domain zinc finger protein 15 (1141 aa).

In terms of domain architecture, SET spans 49–159; the sequence is PNLEIRRLED…PGTELRVWYA (111 aa). The C2H2-type 1 zinc finger occupies 197–219; that stretch reads WACKVCSATFLELQLLNEHLLGH. The tract at residues 224-283 is disordered; that stretch reads KSLPPGSQSEAAAPEKEQDTPRGEPPAVPESENVATKEQKKKPRRGRKPKVSKAEQPLVI. The span at 236–245 shows a compositional bias: basic and acidic residues; that stretch reads APEKEQDTPR. Basic residues predominate over residues 262-274; the sequence is QKKKPRRGRKPKV. 4 C2H2-type zinc fingers span residues 372-394, 399-422, 460-482, and 487-509; these read YQCN…VRSH, FKCE…SYKH, FQCE…KKKH, and FACE…QRRH. A Glycyl lysine isopeptide (Lys-Gly) (interchain with G-Cter in SUMO2) cross-link involves residue Lys-517. 2 C2H2-type zinc fingers span residues 536 to 558 and 563 to 585; these read SGCP…LLTH and YTCE…IHVH. The disordered stretch occupies residues 604-623; the sequence is IGISSEENDDNSDESADSEP. Acidic residues predominate over residues 609 to 620; sequence EENDDNSDESAD. 9 C2H2-type zinc fingers span residues 626 to 649, 654 to 676, 690 to 712, 718 to 740, 746 to 768, 774 to 796, 802 to 824, 830 to 853, and 859 to 882; these read YSCK…MEVH, YGCS…MVIH, HPCE…KLIH, HACE…MRVH, YLCA…MKLH, YECK…CKRH, FMCE…KLIH, WTCS…QLTH, and QSCQ…RRKH. 2 disordered regions span residues 922–973 and 1108–1141; these read AEGK…DETN and QTDV…MYSY. Residues 927 to 938 show a composition bias toward basic residues; the sequence is GKAAKRSHKRKQ. Over residues 1121 to 1141 the composition is skewed to low complexity; sequence PQQAAQPQVQAEQQQQQMYSY.

This sequence belongs to the class V-like SAM-binding methyltransferase superfamily. In terms of tissue distribution, detected in all tissues examined.

It localises to the nucleus. Functionally, sequence-specific DNA-binding transcriptional regulator. Plays a role as a molecular node in a transcriptional network regulating embryonic development and cell fate decision. Stimulates the expression of upstream key transcriptional activators and repressors of the Wnt/beta-catenin and MAPK/ERK pathways, respectively, that are essential for naive pluripotency and self-renewal maintenance of embryonic stem cells (ESCs). Specifically promotes SPRY1 and RSPO1 transcription activation through recognition and direct binding of a specific DNA sequence in their promoter regions. Involved in early embryo development. Also plays a role in induced pluripotent stem cells (iPSCs) reprogramming. In Homo sapiens (Human), this protein is PR domain zinc finger protein 15.